Reading from the N-terminus, the 656-residue chain is Putative L-type lectin-domain containing receptor kinase V.2 (656 aa).

Residues 1–23 form the signal peptide; it reads MSLLLKMLLFSLFFFYMASISQC. Topologically, residues 24–276 are extracellular; it reads SDPTGGQFSF…EDQERSLSSK (253 aa). Residues 29–248 form a legume-lectin like region; that stretch reads GQFSFNGYLY…SHYILGWSFN (220 aa). 5 N-linked (GlcNAc...) asparagine glycosylation sites follow: Asn-78, Asn-124, Asn-159, Asn-190, and Asn-257. Residues 277 to 297 form a helical membrane-spanning segment; that stretch reads ILAISLSISGVTLVIVLILGV. Over 298-656 the chain is Cytoplasmic; it reads MLFLKRKKFL…MTESFLSSGR (359 aa). Positions 334–615 constitute a Protein kinase domain; the sequence is FKNSEVLGKG…GVATLPHNLL (282 aa). ATP is bound by residues 340 to 348 and Lys-363; that span reads LGKGGFGKV. Catalysis depends on Asp-459, which acts as the Proton acceptor.

In the C-terminal section; belongs to the protein kinase superfamily. Ser/Thr protein kinase family. The protein in the N-terminal section; belongs to the leguminous lectin family.

The protein localises to the cell membrane. It catalyses the reaction L-seryl-[protein] + ATP = O-phospho-L-seryl-[protein] + ADP + H(+). The catalysed reaction is L-threonyl-[protein] + ATP = O-phospho-L-threonyl-[protein] + ADP + H(+). This Arabidopsis thaliana (Mouse-ear cress) protein is Putative L-type lectin-domain containing receptor kinase V.2 (LECRK52).